The sequence spans 248 residues: Mannose-binding protein C (248 aa).

The first 20 residues, M1–S20, serve as a signal peptide directing secretion. One can recognise a Collagen-like domain in the interval G42–N99. Residues I43 to S110 form a disordered region. A 4-hydroxyproline modification is found at P47. Residues K49–E61 are compositionally biased toward basic and acidic residues. 4-hydroxyproline is present on residues P73, P79, P82, and P88. A compositionally biased stretch (pro residues) spans K75–S87. Residues R112–L130 are a coiled coil. The C-type lectin domain maps to V134–E245. 2 disulfide bridges follow: C155-C244 and C222-C236.

As to quaternary structure, oligomeric complex of 3 or more homotrimers. Interacts with MASP1 and MASP2. Interacts with MEP1A and MEP1B and may inhibit their catalytic activity. In terms of processing, hydroxylation on proline residues within the sequence motif, GXPG, is most likely to be 4-hydroxy as this fits the requirement for 4-hydroxylation in vertebrates.

It localises to the secreted. Calcium-dependent lectin involved in innate immune defense. Binds mannose, fucose and N-acetylglucosamine on different microorganisms and activates the lectin complement pathway. Binds to late apoptotic cells, as well as to apoptotic blebs and to necrotic cells, but not to early apoptotic cells, facilitating their uptake by macrophages. In Nomascus concolor (Black crested gibbon), this protein is Mannose-binding protein C (MBL2).